We begin with the raw amino-acid sequence, 1014 residues long: MNGEGTGIGAPTPALAGFLGKSKDRNASPGNCPWCLAKGQTNALRFYAVNLKETVLLCTNAVCLYPLVSRSLEEVRASLSKGGCKRSISSLPDISDDSCPPKRPREEKLDVLADVSEPCDAEVNDATLPDDTVKTQTFTDQQSAPAETISLDKTEEQPVSIEDIKEQPISHDATEGQPISIDQTEEQPVSILHTEEQPIVLDLIEVKPMSVDHSEEQPICIDNTKERPVSIVHTEEQSIVLDLFEVKPMSIAHTEEKPTSFDHIEEKPMSIAHTEEKPVSLVHTEDQHLSIDQTEEQPISIDPTEEQQPEELPAVSDEDVDLCERKEDCVSSTQDEMEEEVLESSSELVPVHSELFWKNEENMCWLDAMLVMLVHCRTIRGTPCRGIKLSDKLATVPCNDSVVWKLCWRYDKTCAYLQARKKQSEDKVLRVPAGVLVEAERRLSALRLSVFKLLQPTLKCEIGQQETPVFALPLLLRSDKWAQDIFQHTIRWEFKCTCCDFTVNESVEKTLTTLTCIVKDWHPLKANNRTQCNKCEHKNQRRKMVLEKLSSVFALHFVEGLPRKDLTKYGFTFQGFQYSVSTIIQYNKHLQHFVTWVRQSNGFWLELDDLKHPYSPTHKRLPFPSSEFHILFWETDSFKEEHSEVCLPTAPPEVPNAPDEHPPKLSDSVATDTCVISALTVEDTTASSIADTSIGSTTLLDTFEGLTHKDIVTLTLVNSESPKNEPRPMRPGFVSAPRHCPFEASNLLSGIPKTGSRLSTPPIPQKSSLVHKPEVAAAAVSKTHLQPTSLFQRHPSFQSTPIRPPPPLPPAPKPKPSLQYDKHEDLPVKPADMFGGFKTKKLANSQPKQISLPGGLNPSVKKTAGQEPISTTEALRLKLMKKLKAKKKKLAKLNQLLGNGGESVAKPDSTALSSPYSVTSSTTTYDSFDDQFLADLLSPATTVSNLSPDSTGLLEMLNNGQNGEQQNPAVATLAPEATLTCSSSTISPLDEYMQSGMCHTALENADFNSLDIFF.

2 disordered regions span residues 137–158 (TFTDQQSAPAETISLDKTEEQP) and 275–318 (EEKP…VSDE). The segment covering 275–289 (EEKPVSLVHTEDQHL) has biased composition (basic and acidic residues). Residues 355 to 636 (LFWKNEENMC…EFHILFWETD (282 aa)) form the USP domain. The active-site Nucleophile is the Cys-364. An SUMO-binding region spans residues 364-631 (CWLDAMLVML…PFPSSEFHIL (268 aa)). His-592 functions as the Proton acceptor in the catalytic mechanism. Disordered stretches follow at residues 794 to 823 (HPSFQSTPIRPPPPLPPAPKPKPSLQYDKH) and 844 to 867 (NSQPKQISLPGGLNPSVKKTAGQE). Over residues 802-815 (IRPPPPLPPAPKPK) the composition is skewed to pro residues.

Belongs to the peptidase C19 family.

The protein localises to the nucleus. Its subcellular location is the cajal body. Its function is as follows. SUMO-specific isopeptidase involved in protein desumoylation. Specifically binds SUMO proteins with a higher affinity for sumo2 and sumo3 which it cleaves more efficiently. Also able to process full-length SUMO proteins to their mature forms. Plays a key role in RNA polymerase-II-mediated snRNA transcription in the Cajal bodies. Is a component of complexes that can bind to U snRNA genes. The protein is SUMO-specific isopeptidase USPL1 (uspl1) of Danio rerio (Zebrafish).